An 868-amino-acid chain; its full sequence is Dolichyl-phosphooligosaccharide-protein glycotransferase 3 (868 aa).

Residues 1-16 (MQNAESWFKKYWHLSV) are Cytoplasmic-facing. Residues 17 to 36 (LVIAALISVKLRILNPWNSV) traverse the membrane as a helical segment. The Extracellular segment spans residues 37–101 (FTWTVRLGGN…IAGIIFSATS (65 aa)). The DXD motif 1 signature appears at 45-47 (GND). Residue Asp-47 participates in Mn(2+) binding. His-81 provides a ligand contact to a glycophospholipid. Residues 102 to 131 (GESLRAVLAFIPAIGGVLAILPVYLLTREV) form a helical membrane-spanning segment. Residues 132–133 (FD) lie on the Cytoplasmic side of the membrane. A helical transmembrane segment spans residues 134–153 (KRAAVIAAFLIAIVPGQFLQ). At 154 to 162 (RSILGFNDH) the chain is on the extracellular side. Residue Asp-161 participates in Mn(2+) binding. The DXD motif 2 signature appears at 161–163 (DHH). His-162 provides a ligand contact to a glycophospholipid. Position 163 (His-163) interacts with Mn(2+). A helical membrane pass occupies residues 163-184 (HIWEAFWQVSALGTFLLAYNRW). The Cytoplasmic segment spans residues 185–199 (KGHDLSHNLTARQMA). The helical transmembrane segment at 200–212 (YPVIAGITIGLYV) threads the bilayer. Residues 213 to 215 (LSW) lie on the Extracellular side of the membrane. A helical transmembrane segment spans residues 216–238 (GAGFIIAPIILAFMFFAFVLAGF). The Cytoplasmic segment spans residues 239–241 (VNA). The helical transmembrane segment at 242-262 (DRKNLSLVAVVTFAVSALIYL) threads the bilayer. The Extracellular portion of the chain corresponds to 263-279 (PFAFNYPGFSTIFYSPF). The helical transmembrane segment at 280–303 (QLLVLLGSAVIAAAFYQIEKWNDV) threads the bilayer. At 304–312 (GFFERVGLG) the chain is on the cytoplasmic side. The chain crosses the membrane as a helical span at residues 313–330 (RKGMPLAVIVLTALIMGL). The Extracellular portion of the chain corresponds to 331-373 (FFVISPDFARNLLSVVRVVQPKGGALTIAEVYPFFFTHNGEFT). Residues 357 to 360 (TIAE) carry the TIXE motif motif. Residues 374 to 396 (LTNAVLHFGALFFFGMAGILYSA) form a helical membrane-spanning segment. Over 397 to 404 (YRFLKRRS) the chain is Cytoplasmic. A helical transmembrane segment spans residues 405-423 (FPEMALLIWAIAMFIALWG). At 424–427 (QNRF) the chain is on the extracellular side. Arg-426 lines the a glycophospholipid pocket. Residues 428-452 (AYYFAAVSAVYSALALSVVFDKLHL) form a helical membrane-spanning segment. The Cytoplasmic segment spans residues 453–468 (YRALENAIGARNKLSY). The chain crosses the membrane as a helical span at residues 469–494 (FRVAFALLIALAAIYPTYILADAQSS). Over 495–868 (YAGGPNKQWY…QNGEIIQLDL (374 aa)) the chain is Extracellular. An interacts with target acceptor peptide in protein substrate region spans residues 550-552 (WWD). The WWDYG motif signature appears at 550 to 554 (WWDYG). Residues 613-622 (EMETGKYYAM) carry the DKi motif motif.

It belongs to the STT3 family. Mg(2+) is required as a cofactor. Mn(2+) serves as cofactor. It depends on Zn(2+) as a cofactor.

The protein resides in the cell membrane. It catalyses the reaction an archaeal dolichyl phosphooligosaccharide + [protein]-L-asparagine = an archaeal dolichyl phosphate + a glycoprotein with the oligosaccharide chain attached by N-beta-D-glycosyl linkage to a protein L-asparagine.. The protein operates within protein modification; protein glycosylation. Functionally, oligosaccharyl transferase (OST) that catalyzes the initial transfer of a defined glycan (a glucose-linked heptasaccharide composed of 3 Glc, 2 Man, 2 Gal and a sulfate for A.fulgidus AglB-L) from the lipid carrier dolichol-monophosphate to an asparagine residue within an Asn-X-Ser/Thr consensus motif in nascent polypeptide chains, the first step in protein N-glycosylation. In Archaeoglobus fulgidus (strain ATCC 49558 / DSM 4304 / JCM 9628 / NBRC 100126 / VC-16), this protein is Dolichyl-phosphooligosaccharide-protein glycotransferase 3 (aglB3).